The chain runs to 493 residues: Probable glycine dehydrogenase (decarboxylating) subunit 2 (493 aa).

Lys-269 bears the N6-(pyridoxal phosphate)lysine mark.

It belongs to the GcvP family. C-terminal subunit subfamily. As to quaternary structure, the glycine cleavage system is composed of four proteins: P, T, L and H. In this organism, the P 'protein' is a heterodimer of two subunits. It depends on pyridoxal 5'-phosphate as a cofactor.

It carries out the reaction N(6)-[(R)-lipoyl]-L-lysyl-[glycine-cleavage complex H protein] + glycine + H(+) = N(6)-[(R)-S(8)-aminomethyldihydrolipoyl]-L-lysyl-[glycine-cleavage complex H protein] + CO2. Its function is as follows. The glycine cleavage system catalyzes the degradation of glycine. The P protein binds the alpha-amino group of glycine through its pyridoxal phosphate cofactor; CO(2) is released and the remaining methylamine moiety is then transferred to the lipoamide cofactor of the H protein. This is Probable glycine dehydrogenase (decarboxylating) subunit 2 from Chloroherpeton thalassium (strain ATCC 35110 / GB-78).